The primary structure comprises 293 residues: MDLGKVITAMVTPIHPEKDKVCKKRIHHLVNHLIANGSDGLVVAGTTGESPTLSHDEKIKLFRQVIETNAGRAKLIAGTGSNNTAETIAFTKEVAELGGIDAVLVVAPYYNKPNQDGLYAHFVAVAEASDLPVVIYNIPGRSVVNIEPETIIRLAKLPNIVGVKESSGNLDNISKIIAETPEDFLVYSGDDSLTLPILAVGGDGVISVASHVVGKEMQEMIQAFARGEVQKAASIHRSLLPIMNGLFAVPNPAPTKYLLNQQGISVGPVRLPLVDLNAEQGTKLQAILEGLSK.

Pyruvate is bound at residue T47. The active-site Proton donor/acceptor is Y136. The active-site Schiff-base intermediate with substrate is the K164. I206 provides a ligand contact to pyruvate.

Belongs to the DapA family. As to quaternary structure, homotetramer; dimer of dimers.

It is found in the cytoplasm. The enzyme catalyses L-aspartate 4-semialdehyde + pyruvate = (2S,4S)-4-hydroxy-2,3,4,5-tetrahydrodipicolinate + H2O + H(+). The protein operates within amino-acid biosynthesis; L-lysine biosynthesis via DAP pathway; (S)-tetrahydrodipicolinate from L-aspartate: step 3/4. Its function is as follows. Catalyzes the condensation of (S)-aspartate-beta-semialdehyde [(S)-ASA] and pyruvate to 4-hydroxy-tetrahydrodipicolinate (HTPA). The protein is 4-hydroxy-tetrahydrodipicolinate synthase of Listeria welshimeri serovar 6b (strain ATCC 35897 / DSM 20650 / CCUG 15529 / CIP 8149 / NCTC 11857 / SLCC 5334 / V8).